Consider the following 2320-residue polypeptide: Bromodomain and WD repeat-containing protein 1 (2320 aa).

WD repeat units lie at residues 184–223 (GHLS…LLST), 226–265 (GHSA…PVAV), 268–311 (GHTG…LKFS), 322–365 (RPGV…AELE), 366–405 (SHTD…WRSI), 424–463 (FMKP…LLHN), 466–506 (GHAD…KMKH), and 514–553 (QGHG…PYEK). The disordered stretch occupies residues 668-691 (QRMGADQDTIPRGLSNGEETPRRG). T687 bears the Phosphothreonine mark. S696, S701, and S710 each carry phosphoserine. Disordered regions lie at residues 809–867 (NRSW…RYSD) and 895–925 (SEDE…ENLR). 2 stretches are compositionally biased toward low complexity: residues 814-824 (ELSSGNESSSS) and 854-867 (YSES…RYSD). The span at 907-918 (PKRRRKRKKENK) shows a compositional bias: basic residues. Residues 1157–1264 (WGQKSRDEEC…DQLLKFIKNQ (108 aa)) enclose the Bromo 1 domain. Positions 1271-1304 (ELSNTSENDEQNAEDLDDSDLPKTSSGRRRVHDG) are disordered. Residues 1277–1289 (ENDEQNAEDLDDS) show a composition bias toward acidic residues. Residue S1289 is modified to Phosphoserine. One can recognise a Bromo 2 domain in the interval 1313–1418 (YVESNWKKQC…ALFEEKMKKI (106 aa)). A disordered region spans residues 1434-1593 (RSQRFKQRQN…TGPVSLANGC (160 aa)). A compositionally biased stretch (polar residues) spans 1443–1454 (NCKGDSQPNKSI). Basic residues predominate over residues 1455–1464 (RNLKPKRLKS). Phosphoserine is present on S1475. Residues 1475–1496 (SPTQSTSSRTAYLGTHKTSAGI) show a composition bias toward polar residues. At T1477 the chain carries Phosphothreonine. The residue at position 1479 (S1479) is a Phosphoserine. Low complexity predominate over residues 1497-1509 (SSGVTSGDSSDSA). Residues 1520 to 1529 (PITNGSTLSE) show a composition bias toward polar residues. Low complexity predominate over residues 1535–1548 (SLATSLSSSASSSS). Residues 1549–1561 (EESKESSRARESS) are compositionally biased toward basic and acidic residues. Phosphoserine occurs at positions 1605, 1607, 1678, 1683, and 1686. Disordered regions lie at residues 1670-1805 (ARKK…KYNT), 1817-1839 (KILS…KCHK), and 1862-1899 (DHGC…KISR). Basic and acidic residues predominate over residues 1676-1687 (HNSEDEQSLKSE). Over residues 1701–1712 (PVSSSHTAQSNV) the composition is skewed to polar residues. 2 stretches are compositionally biased toward basic and acidic residues: residues 1715-1728 (SENR…DLRV) and 1751-1769 (LKIE…DHAC). Phosphoserine occurs at positions 1755, 1756, 1786, 1788, 1793, and 1820. Acidic residues predominate over residues 1821 to 1832 (DSEDSESEEQDR). T1867 bears the Phosphothreonine mark. Phosphoserine is present on residues S1871, S1904, S1905, S1907, S1910, and S1943. T1955 bears the Phosphothreonine mark. 2 disordered regions span residues 2014–2077 (LNGD…TLAQ) and 2112–2184 (TKVI…TKGK). 3 positions are modified to phosphoserine: S2018, S2020, and S2052. Composition is skewed to basic and acidic residues over residues 2054 to 2069 (EDSK…DRTF) and 2114 to 2139 (VIHD…ENVK). The span at 2140-2165 (ISETTGNSKFRPDTSSKSSDLGSVTE) shows a compositional bias: polar residues. Phosphothreonine is present on T2164. 2 positions are modified to phosphoserine: S2166 and V2214.

In terms of assembly, interacts with SMARCA4. In terms of tissue distribution, ubiquitously expressed. Expressed in respiratory epithelial cells and testis spermatozoa.

Its subcellular location is the cytoplasm. The protein resides in the nucleus. The protein localises to the cell projection. It localises to the cilium membrane. It is found in the cytoskeleton. Its subcellular location is the flagellum axoneme. Its function is as follows. May be a transcriptional activator. May be involved in chromatin remodeling. Plays a role in the regulation of cell morphology and cytoskeletal organization. Required in the control of cell shape. The protein is Bromodomain and WD repeat-containing protein 1 (BRWD1) of Homo sapiens (Human).